The sequence spans 457 residues: Fibrinogen C domain-containing protein 1-A (457 aa).

Positions 1 to 20 (MGSDRWKNIGGTPQMEDSAQ) are disordered. The Cytoplasmic segment spans residues 1–33 (MGSDRWKNIGGTPQMEDSAQEKTQRKGCGYILC). Residues 34-54 (TVLLSVAVLLAVTVTGAVLFM) form a helical; Signal-anchor for type II membrane protein membrane-spanning segment. Residues 55–457 (NHYHAPSTEP…MKIRPQREEN (403 aa)) lie on the Extracellular side of the membrane. The interval 216 to 235 (ADLQRAPSRNSRPRGCANGS) is disordered. One can recognise a Fibrinogen C-terminal domain in the interval 231 to 454 (CANGSKPRDC…FTEMKIRPQR (224 aa)). N-linked (GlcNAc...) asparagine glycosylation is present at Asn233. A disulfide bond links Cys240 and Cys269. An N-linked (GlcNAc...) asparagine glycan is attached at Asn336. The Ca(2+) site is built by Asp389 and Asp391. A disulfide bond links Cys397 and Cys410.

As to quaternary structure, homotetramer; disulfide-linked.

It is found in the membrane. Functionally, acetyl group-binding receptor which shows a calcium-dependent binding to acetylated structures such as chitin, some N-acetylated carbohydrates, and amino acids. The protein is Fibrinogen C domain-containing protein 1-A (fibcd1-a) of Xenopus laevis (African clawed frog).